Here is a 248-residue protein sequence, read N- to C-terminus: Octanoyltransferase (248 aa).

The 186-residue stretch at 53–238 folds into the BPL/LPL catalytic domain; the sequence is ADTGDEIWVV…NLDGASAAAD (186 aa). Residues 93–100, 165–167, and 178–180 contribute to the substrate site; these read RGGQITYH, ALG, and GLS. C196 acts as the Acyl-thioester intermediate in catalysis.

It belongs to the LipB family.

It localises to the cytoplasm. It catalyses the reaction octanoyl-[ACP] + L-lysyl-[protein] = N(6)-octanoyl-L-lysyl-[protein] + holo-[ACP] + H(+). Its pathway is protein modification; protein lipoylation via endogenous pathway; protein N(6)-(lipoyl)lysine from octanoyl-[acyl-carrier-protein]: step 1/2. Functionally, catalyzes the transfer of endogenously produced octanoic acid from octanoyl-acyl-carrier-protein onto the lipoyl domains of lipoate-dependent enzymes. Lipoyl-ACP can also act as a substrate although octanoyl-ACP is likely to be the physiological substrate. The protein is Octanoyltransferase of Burkholderia orbicola (strain MC0-3).